Consider the following 82-residue polypeptide: Small, acid-soluble spore protein gamma-type (82 aa).

Polar residues-rich tracts occupy residues 1–24 (MANSNNKTNAQQVRKQNQQSASGQ) and 32–50 (ASETNVQQVRKQNQQSAAG). The tract at residues 1–82 (MANSNNKTNA…SAEQNKQQNS (82 aa)) is disordered. Repeats lie at residues 19 to 45 (QSASGQGQFGTEFASETNVQQVRKQNQ) and 46 to 72 (QSAAGQGQFGTEFASETDAQQVRQQNQ). Over residues 69 to 82 (QQNQSAEQNKQQNS) the composition is skewed to low complexity.

Belongs to the gamma-type SASP family.

Functionally, SASP are bound to spore DNA. They are double-stranded DNA-binding proteins that cause DNA to change to an a-like conformation. They protect the DNA backbone from chemical and enzymatic cleavage and are thus involved in dormant spore's high resistance to UV light. The protein is Small, acid-soluble spore protein gamma-type of Bacillus subtilis.